Here is a 161-residue protein sequence, read N- to C-terminus: Large ribosomal subunit protein uL15 (161 aa).

A disordered region spans residues 1-44; it reads MKLSEIADNAGSRKKRMRVGRGIGSGKGKTAGRGGKGQTARSGV. The span at 21–37 shows a compositional bias: gly residues; that stretch reads RGIGSGKGKTAGRGGKG.

Belongs to the universal ribosomal protein uL15 family. In terms of assembly, part of the 50S ribosomal subunit.

Its function is as follows. Binds to the 23S rRNA. This chain is Large ribosomal subunit protein uL15, found in Rhodopseudomonas palustris (strain BisA53).